The primary structure comprises 394 residues: Bifunctional enzyme Fae/Hps (394 aa).

The interval 1–162 (MEFRIGEALI…YEKDRSFHPF (162 aa)) is formaldehyde-activating enzyme. H18 acts as the Proton donor in catalysis. Substrate-binding residues include D20, L49, K67, T69, and Q84. Residues 163–394 (VGRKLTKLWD…TDQFRIMTDF (232 aa)) form a 3-hexulose-6-phosphate synthase region.

It in the N-terminal section; belongs to the formaldehyde-activating enzyme family. This sequence in the C-terminal section; belongs to the HPS/KGPDC family. HPS subfamily.

The enzyme catalyses 5,6,7,8-tetrahydromethanopterin + formaldehyde = 5,10-methylenetetrahydromethanopterin + H2O. It catalyses the reaction D-ribulose 5-phosphate + formaldehyde = D-arabino-hex-3-ulose 6-phosphate. The protein operates within carbohydrate biosynthesis; D-ribose 5-phosphate biosynthesis. Its function is as follows. Catalyzes the condensation of formaldehyde with tetrahydromethanopterin (H(4)MPT) to 5,10-methylenetetrahydromethanopterin. Functionally, catalyzes the reversible formation of ribulose-5-phosphate and formaldehyde from 3-hexulose-6-phosphate. This is Bifunctional enzyme Fae/Hps from Archaeoglobus fulgidus (strain ATCC 49558 / DSM 4304 / JCM 9628 / NBRC 100126 / VC-16).